Reading from the N-terminus, the 284-residue chain is Diaminopimelate epimerase (284 aa).

The substrate site is built by asparagine 14 and asparagine 67. Residue cysteine 76 is the Proton donor of the active site. Substrate-binding positions include 77 to 78 (GN), asparagine 166, asparagine 199, and 217 to 218 (ER). Cysteine 226 functions as the Proton acceptor in the catalytic mechanism. 227 to 228 (GT) serves as a coordination point for substrate.

This sequence belongs to the diaminopimelate epimerase family. Homodimer.

It is found in the cytoplasm. The catalysed reaction is (2S,6S)-2,6-diaminopimelate = meso-2,6-diaminopimelate. Its pathway is amino-acid biosynthesis; L-lysine biosynthesis via DAP pathway; DL-2,6-diaminopimelate from LL-2,6-diaminopimelate: step 1/1. Its function is as follows. Catalyzes the stereoinversion of LL-2,6-diaminopimelate (L,L-DAP) to meso-diaminopimelate (meso-DAP), a precursor of L-lysine and an essential component of the bacterial peptidoglycan. This chain is Diaminopimelate epimerase, found in Bacillus pumilus (strain SAFR-032).